A 110-amino-acid polypeptide reads, in one-letter code: Large ribosomal subunit protein P1B (110 aa).

The span at 69-85 (PAAGGAGAPAAAAGGEA) shows a compositional bias: low complexity. Positions 69–110 (PAAGGAGAPAAAAGGEAAAEEQKEEAKEEEESDEDMGFGLFD) are disordered. Acidic residues predominate over residues 95 to 104 (KEEEESDEDM).

It belongs to the eukaryotic ribosomal protein P1/P2 family. In terms of assembly, component of the large ribosomal subunit (LSU). Mature yeast ribosomes consist of a small (40S) and a large (60S) subunit. The 40S small subunit contains 1 molecule of ribosomal RNA (18S rRNA) and at least 33 different proteins. The large 60S subunit contains 3 rRNA molecules (25S, 5.8S and 5S rRNA) and at least 46 different proteins. The acidic ribosomal P-proteins form the stalk structure of the 60S subunit. They are organized as a pentameric complex in which uL10/P0 interacts with 2 heterodimers of P1 and P2 proteins.

It is found in the cytoplasm. Functionally, component of the ribosome, a large ribonucleoprotein complex responsible for the synthesis of proteins in the cell. The small ribosomal subunit (SSU) binds messenger RNAs (mRNAs) and translates the encoded message by selecting cognate aminoacyl-transfer RNA (tRNA) molecules. The large subunit (LSU) contains the ribosomal catalytic site termed the peptidyl transferase center (PTC), which catalyzes the formation of peptide bonds, thereby polymerizing the amino acids delivered by tRNAs into a polypeptide chain. The nascent polypeptides leave the ribosome through a tunnel in the LSU and interact with protein factors that function in enzymatic processing, targeting, and the membrane insertion of nascent chains at the exit of the ribosomal tunnel. This Schizosaccharomyces pombe (strain 972 / ATCC 24843) (Fission yeast) protein is Large ribosomal subunit protein P1B (rpp102).